Reading from the N-terminus, the 530-residue chain is White collar 2 protein (530 aa).

7 repeat units span residues 9-12 (GSSM), 21-24 (GSGM), 25-28 (GSGM), 29-32 (GSGM), 33-36 (GTGM), 37-40 (GTGM), and 41-44 (GTGM). Positions 9–44 (GSSMYGFGAMGMGSGMGSGMGSGMGTGMGTGMGTGM) are 7 X 4 AA repeats of G-[SAT]-G-M. Positions 134–158 (IATPTTTTSGPSGGPSSGGGSTLTE) are disordered. Positions 144-154 (PSGGPSSGGGS) are enriched in gly residues. A PAS domain is found at 162–232 (RRNWPAKVVE…AELNEAIATG (71 aa)). The disordered stretch occupies residues 315–343 (REEQEEQEESHRTWRMSQEGRSDVTPSDD). The GATA-type zinc-finger motif lies at 468 to 493 (CTDCGTLDSPEWRKGPSGPKTLCNAC). Residues 504–530 (KNANNNNNGGGIGGHNDIHTPMGDHMG) form a disordered region.

Heterodimer of wc-1 and wc-2 (Potential). Binds to DNA.

The protein resides in the nucleus. Functionally, may function as a transcription factor involved in light regulation. Binds and affects blue light regulation of the al-3 gene. Wc-1 and wc-2 interact via homologous PAS domains, bind to promoters of light regulated genes such as frq, and activate transcription. May bind directly to frq. This Neurospora crassa (strain ATCC 24698 / 74-OR23-1A / CBS 708.71 / DSM 1257 / FGSC 987) protein is White collar 2 protein (wc-2).